Here is a 541-residue protein sequence, read N- to C-terminus: Tetratricopeptide repeat protein 8 (541 aa).

The TPR 1 repeat unit spans residues 14–47; it reads YFRRRKFQLCADLCTQMLEKSPYDQEPDPELPVH. Positions 118-137 are disordered; sequence PITGFLRPSTQSGRPGTMEQ. TPR repeat units follow at residues 251–284, 285–317, 318–351, 352–385, 386–419, 423–456, and 457–490; these read WWWK…QEMV, DTFL…FPGE, VTLL…DNTH, VEAI…GIYN, GQLF…AENE, ADVW…NNNH, and AEAY…APHM.

As to quaternary structure, part of BBSome complex, that contains BBS1, BBS2, BBS4, BBS5, BBS7, BBS8/TTC8, BBS9 and BBIP10. Interacts with PCM1. Interacts with CCDC28B. Interacts with PKD1. As to expression, widely expressed.

The protein resides in the cytoplasm. Its subcellular location is the cytoskeleton. It localises to the microtubule organizing center. It is found in the centrosome. The protein localises to the cell projection. The protein resides in the cilium membrane. Its subcellular location is the centriolar satellite. It localises to the cilium. In terms of biological role, the BBSome complex is thought to function as a coat complex required for sorting of specific membrane proteins to the primary cilia. The BBSome complex is required for ciliogenesis but is dispensable for centriolar satellite function. This ciliogenic function is mediated in part by the Rab8 GDP/GTP exchange factor, which localizes to the basal body and contacts the BBSome. Rab8(GTP) enters the primary cilium and promotes extension of the ciliary membrane. Firstly the BBSome associates with the ciliary membrane and binds to RAB3IP/Rabin8, the guanosyl exchange factor (GEF) for Rab8 and then the Rab8-GTP localizes to the cilium and promotes docking and fusion of carrier vesicles to the base of the ciliary membrane. The BBSome complex, together with the LTZL1, controls SMO ciliary trafficking and contributes to the sonic hedgehog (SHH) pathway regulation. Required for proper BBSome complex assembly and its ciliary localization. This Homo sapiens (Human) protein is Tetratricopeptide repeat protein 8 (TTC8).